We begin with the raw amino-acid sequence, 500 residues long: Histidine ammonia-lyase (500 aa).

Positions 142 to 144 form a cross-link, 5-imidazolinone (Ala-Gly); it reads ASG. 2,3-didehydroalanine (Ser) is present on Ser-143.

This sequence belongs to the PAL/histidase family. Post-translationally, contains an active site 4-methylidene-imidazol-5-one (MIO), which is formed autocatalytically by cyclization and dehydration of residues Ala-Ser-Gly.

It is found in the cytoplasm. It catalyses the reaction L-histidine = trans-urocanate + NH4(+). Its pathway is amino-acid degradation; L-histidine degradation into L-glutamate; N-formimidoyl-L-glutamate from L-histidine: step 1/3. The sequence is that of Histidine ammonia-lyase from Macrococcus caseolyticus (strain JCSC5402) (Macrococcoides caseolyticum).